Reading from the N-terminus, the 347-residue chain is Ribosomal RNA large subunit methyltransferase M (347 aa).

S-adenosyl-L-methionine is bound by residues Ser184, Ala217–Gly220, Asp236, Asp256, and Asp272. The active-site Proton acceptor is Lys301.

It belongs to the class I-like SAM-binding methyltransferase superfamily. RNA methyltransferase RlmE family. RlmM subfamily. In terms of assembly, monomer.

It is found in the cytoplasm. It carries out the reaction cytidine(2498) in 23S rRNA + S-adenosyl-L-methionine = 2'-O-methylcytidine(2498) in 23S rRNA + S-adenosyl-L-homocysteine + H(+). In terms of biological role, catalyzes the 2'-O-methylation at nucleotide C2498 in 23S rRNA. In Xanthomonas oryzae pv. oryzae (strain KACC10331 / KXO85), this protein is Ribosomal RNA large subunit methyltransferase M.